Consider the following 363-residue polypeptide: Cytochrome b (363 aa).

4 helical membrane passes run 24 to 44 (VGFS…CLAW), 68 to 90 (FVIR…IHIF), 105 to 125 (VWFI…IGYV), and 171 to 191 (LHVL…LHLF). Heme b-binding residues include H74 and H88. Heme b contacts are provided by H175 and H189. H194 contacts a ubiquinone. 4 helical membrane passes run 219-239 (FYLR…YVIF), 287-307 (FLMV…ILWF), 321-341 (LILF…VLAY), and 342-362 (PIWM…VCRL).

Belongs to the cytochrome b family. As to quaternary structure, the main subunits of complex b-c1 are: cytochrome b, cytochrome c1 and the Rieske protein. Requires heme b as cofactor.

It is found in the mitochondrion inner membrane. In terms of biological role, component of the ubiquinol-cytochrome c reductase complex (complex III or cytochrome b-c1 complex) that is part of the mitochondrial respiratory chain. The b-c1 complex mediates electron transfer from ubiquinol to cytochrome c. Contributes to the generation of a proton gradient across the mitochondrial membrane that is then used for ATP synthesis. In Trypanosoma brucei brucei, this protein is Cytochrome b (MT-CYB).